The primary structure comprises 428 residues: Gamma-glutamyl phosphate reductase (428 aa).

This sequence belongs to the gamma-glutamyl phosphate reductase family.

Its subcellular location is the cytoplasm. The enzyme catalyses L-glutamate 5-semialdehyde + phosphate + NADP(+) = L-glutamyl 5-phosphate + NADPH + H(+). Its pathway is amino-acid biosynthesis; L-proline biosynthesis; L-glutamate 5-semialdehyde from L-glutamate: step 2/2. Catalyzes the NADPH-dependent reduction of L-glutamate 5-phosphate into L-glutamate 5-semialdehyde and phosphate. The product spontaneously undergoes cyclization to form 1-pyrroline-5-carboxylate. The protein is Gamma-glutamyl phosphate reductase of Agrobacterium fabrum (strain C58 / ATCC 33970) (Agrobacterium tumefaciens (strain C58)).